Here is a 424-residue protein sequence, read N- to C-terminus: Double homeobox protein 4 (424 aa).

Positions 1–10 (MALPTPSDST) are enriched in polar residues. Disordered stretches follow at residues 1-24 (MALPTPSDSTLPAEARGRGRRRRL), 72-102 (SRQLRQHRRESRPWPGRRGPPEGRRKRTAVT), 218-362 (LQPS…LQEP), and 388-414 (QPLLETEAPGELEASEEAASLEAPLSE). 2 DNA-binding regions (homeobox) span residues 19-78 (GRRR…LRQH) and 94-153 (GRRK…PGQG). The span at 265-274 (KSREDRDPQR) shows a compositional bias: basic and acidic residues. Composition is skewed to low complexity over residues 278–302 (PGPCAVAQPGPAQAGPQGQGVLAPP) and 319–329 (AGAAWEPQAGA). The segment at 327-424 (AGAAPPPQPA…EEYRALLEEL (98 aa)) is required for interaction with EP300 and CREBBP, and for transcriptional activation of target genes. The tract at residues 405–424 (AASLEAPLSEEEYRALLEEL) is important for transcriptional activation of target genes.

The protein belongs to the paired homeobox family. In terms of assembly, binds DNA as a monomer. Interacts (via C-terminus) with EP300 and CREBBP. As to expression, isoform 1: Does not seem to be expressed in normal muscle, but is detected in muscle of individuals with FSHD, and also in testis (at protein level). Isoform 1: Does not seem to be expressed in normal muscle, but in muscle of individuals with FSHD, where it may be toxic to cells. Isoform 2: Detected in skeletal muscle, fibroblasts and testis from healthy individuals.

The protein resides in the nucleus. It localises to the cytoplasm. In terms of biological role, transcription factor that is selectively and transiently expressed in cleavage-stage embryos. Binds to double-stranded DNA elements with the consensus sequence 5'-TAATCTAATCA-3'. Binds to chromatin containing histone H3 acetylated at 'Lys-27' (H3K27ac) and promotes deacetylation of H3K27ac. In parallel, binds to chromatin that lacks histone H3 acetylation at 'Lys-27' (H3K27ac) and recruits EP300 and CREBBP to promote acetylation of histone H3 at 'Lys-27' at new sites. Involved in transcriptional regulation of numerous genes, primarily as transcriptional activator, but also mediates repression of a set of target genes. Promotes expression of ZSCAN4 and KDM4E, two proteins with essential roles during early embryogenesis. Promotes nuclear translocation of CTNNB1/beta-catenin and its subsequent activation of target genes. Heterologous expression in cultured embryonic stem cells mediates transcription of HERVL retrotransposons and transcripts derived from ACRO1 and HSATII satellite repeats. May activate expression of PITX1. May regulate microRNA (miRNA) expression. Inappropriate expression can inhibit myogenesis and promote apoptosis. Its function is as follows. Probably inactive as a transcriptional activator, due to the absence of the C-terminal region that is important for transcriptional activation. Can inhibit transcriptional activation mediated by isoform 1. Heterologous expression of isoform 2 has no deleterious effect on cell survival. The polypeptide is Double homeobox protein 4 (Homo sapiens (Human)).